The primary structure comprises 271 residues: MATH domain and coiled-coil domain-containing protein At3g27040 (271 aa).

Residues 7–133 (DKKFTWVIKN…NGEVKIVAEV (127 aa)) enclose the MATH domain. Positions 230 to 271 (KLDWLEKKLKETGKSRLQEIEEDLKDLKVKCADMDALLDFLR) form a coiled coil.

This Arabidopsis thaliana (Mouse-ear cress) protein is MATH domain and coiled-coil domain-containing protein At3g27040.